The sequence spans 200 residues: ATP-dependent Clp protease proteolytic subunit (200 aa).

Serine 98 functions as the Nucleophile in the catalytic mechanism. Residue histidine 123 is part of the active site.

The protein belongs to the peptidase S14 family. As to quaternary structure, fourteen ClpP subunits assemble into 2 heptameric rings which stack back to back to give a disk-like structure with a central cavity, resembling the structure of eukaryotic proteasomes.

The protein resides in the cytoplasm. The catalysed reaction is Hydrolysis of proteins to small peptides in the presence of ATP and magnesium. alpha-casein is the usual test substrate. In the absence of ATP, only oligopeptides shorter than five residues are hydrolyzed (such as succinyl-Leu-Tyr-|-NHMec, and Leu-Tyr-Leu-|-Tyr-Trp, in which cleavage of the -Tyr-|-Leu- and -Tyr-|-Trp bonds also occurs).. Functionally, cleaves peptides in various proteins in a process that requires ATP hydrolysis. Has a chymotrypsin-like activity. Plays a major role in the degradation of misfolded proteins. This Ehrlichia canis (strain Jake) protein is ATP-dependent Clp protease proteolytic subunit.